Consider the following 55-residue polypeptide: Large ribosomal subunit protein bL33 (55 aa).

Belongs to the bacterial ribosomal protein bL33 family.

The polypeptide is Large ribosomal subunit protein bL33 (Bifidobacterium longum (strain DJO10A)).